The following is a 71-amino-acid chain: ATP synthase subunit c (71 aa).

The next 2 membrane-spanning stretches (helical) occupy residues Val5–Ala25 and Phe46–Phe66.

The protein belongs to the ATPase C chain family. In terms of assembly, F-type ATPases have 2 components, F(1) - the catalytic core - and F(0) - the membrane proton channel. F(1) has five subunits: alpha(3), beta(3), gamma(1), delta(1), epsilon(1). F(0) has three main subunits: a(1), b(2) and c(10-14). The alpha and beta chains form an alternating ring which encloses part of the gamma chain. F(1) is attached to F(0) by a central stalk formed by the gamma and epsilon chains, while a peripheral stalk is formed by the delta and b chains.

Its subcellular location is the cell membrane. F(1)F(0) ATP synthase produces ATP from ADP in the presence of a proton or sodium gradient. F-type ATPases consist of two structural domains, F(1) containing the extramembraneous catalytic core and F(0) containing the membrane proton channel, linked together by a central stalk and a peripheral stalk. During catalysis, ATP synthesis in the catalytic domain of F(1) is coupled via a rotary mechanism of the central stalk subunits to proton translocation. Its function is as follows. Key component of the F(0) channel; it plays a direct role in translocation across the membrane. A homomeric c-ring of between 10-14 subunits forms the central stalk rotor element with the F(1) delta and epsilon subunits. The sequence is that of ATP synthase subunit c from Clostridium beijerinckii (strain ATCC 51743 / NCIMB 8052) (Clostridium acetobutylicum).